Here is a 132-residue protein sequence, read N- to C-terminus: Small ribosomal subunit protein uS8 (132 aa).

This sequence belongs to the universal ribosomal protein uS8 family. Part of the 30S ribosomal subunit. Contacts proteins S5 and S12.

Functionally, one of the primary rRNA binding proteins, it binds directly to 16S rRNA central domain where it helps coordinate assembly of the platform of the 30S subunit. This is Small ribosomal subunit protein uS8 from Agrobacterium fabrum (strain C58 / ATCC 33970) (Agrobacterium tumefaciens (strain C58)).